The chain runs to 1210 residues: V-type proton ATPase 116 kDa subunit a 4 (1210 aa).

At 1–715 (MSSFSNVGFV…YTIITFPFLF (715 aa)) the chain is on the cytoplasmic side. The span at 259–271 (SSKISFTSSSPSP) shows a compositional bias: low complexity. Positions 259-292 (SSKISFTSSSPSPQRNPKNEAQKNSSSKREETSM) are disordered. Residues 275–291 (PKNEAQKNSSSKREETS) are compositionally biased toward basic and acidic residues. A coiled-coil region spans residues 339-405 (FVKQMRRCEE…EREFLDLNNN (67 aa)). The helical transmembrane segment at 716–736 (AVMFGDAAHGAILLLAALFFI) threads the bilayer. Residues 737–760 (RNERKIESKKIRDEIFNTFYGGRY) are Extracellular-facing. Residues 761–781 (IMMLMGIFSIYTGFLYNDAFA) traverse the membrane as a helical segment. Topologically, residues 782 to 855 (KSFNVFGSGW…SFLNSMKMKA (74 aa)) are cytoplasmic. Residues 856 to 876 (SVIIGITQMTFGVFLSVLNHI) form a helical membrane-spanning segment. Over 877 to 892 (HFKSYIDIISNFIPQV) the chain is Extracellular. A helical membrane pass occupies residues 893 to 913 (IFLSCIFIYLCIQIIVKWIFF). The Cytoplasmic segment spans residues 914–976 (SVNAENVFGF…WYPNQRLVET (63 aa)). The chain crosses the membrane as a helical span at residues 977–997 (ILISISLACIPIMLFGKPLWV). Over 998–1127 (RFVTSKRHKL…NETIAMCLKP (130 aa)) the chain is Extracellular. 3 N-linked (GlcNAc...) asparagine glycosylation sites follow: asparagine 1010, asparagine 1019, and asparagine 1118. The chain crosses the membrane as a helical span at residues 1128 to 1148 (VVACVAFFIFASLSLSILIMM). Residues 1149 to 1210 (EGLSAFLHAL…DISSGQHLHI (62 aa)) are Cytoplasmic-facing.

The protein belongs to the V-ATPase 116 kDa subunit family. V-ATPase is a heteromultimeric enzyme made up of two complexes: the ATP-hydrolytic V1 complex and the proton translocation V0 complex. The V1 complex consists of three catalytic AB heterodimers that form a heterohexamer, three peripheral stalks each consisting of EG heterodimers, one central rotor including subunits D and F, and the regulatory subunits C and H. The proton translocation complex V0 consists of the proton transport subunit a, a ring of proteolipid subunits c9c'', rotary subunit d, subunits e and f, and the accessory subunits vah-19/Ac45 and vah-20/PRR. As to expression, expressed in uterus.

It localises to the membrane. Its function is as follows. Subunit of the V0 complex of vacuolar(H+)-ATPase (V-ATPase), a multisubunit enzyme composed of a peripheral complex (V1) that hydrolyzes ATP and a membrane integral complex (V0) that translocates protons. V-ATPase is responsible for acidifying and maintaining the pH of intracellular compartments and in some cell types, is targeted to the plasma membrane, where it is responsible for acidifying the extracellular environment. The sequence is that of V-type proton ATPase 116 kDa subunit a 4 from Caenorhabditis elegans.